The primary structure comprises 451 residues: Bifunctional protein GlmU (451 aa).

The pyrophosphorylase stretch occupies residues 1 to 230 (MNNPIAAIVL…PADVGGINSR (230 aa)). Residues 10 to 13 (LAAG), K24, Q74, 79 to 80 (GT), 102 to 104 (YGD), G142, E156, N171, and N228 each bind UDP-N-acetyl-alpha-D-glucosamine. D104 is a Mg(2+) binding site. N228 serves as a coordination point for Mg(2+). Positions 231-251 (AELAAAEAQWQAFRREEAMAA) are linker. Residues 252-451 (GASLRAPETV…RKKKAAEQKK (200 aa)) are N-acetyltransferase. UDP-N-acetyl-alpha-D-glucosamine is bound by residues R317 and K335. Catalysis depends on H347, which acts as the Proton acceptor. 2 residues coordinate UDP-N-acetyl-alpha-D-glucosamine: Y350 and N361. Acetyl-CoA contacts are provided by residues A364, 370 to 371 (NY), S389, A407, and R424.

This sequence in the N-terminal section; belongs to the N-acetylglucosamine-1-phosphate uridyltransferase family. The protein in the C-terminal section; belongs to the transferase hexapeptide repeat family. As to quaternary structure, homotrimer. Mg(2+) is required as a cofactor.

Its subcellular location is the cytoplasm. The catalysed reaction is alpha-D-glucosamine 1-phosphate + acetyl-CoA = N-acetyl-alpha-D-glucosamine 1-phosphate + CoA + H(+). It catalyses the reaction N-acetyl-alpha-D-glucosamine 1-phosphate + UTP + H(+) = UDP-N-acetyl-alpha-D-glucosamine + diphosphate. Its pathway is nucleotide-sugar biosynthesis; UDP-N-acetyl-alpha-D-glucosamine biosynthesis; N-acetyl-alpha-D-glucosamine 1-phosphate from alpha-D-glucosamine 6-phosphate (route II): step 2/2. It functions in the pathway nucleotide-sugar biosynthesis; UDP-N-acetyl-alpha-D-glucosamine biosynthesis; UDP-N-acetyl-alpha-D-glucosamine from N-acetyl-alpha-D-glucosamine 1-phosphate: step 1/1. The protein operates within bacterial outer membrane biogenesis; LPS lipid A biosynthesis. Functionally, catalyzes the last two sequential reactions in the de novo biosynthetic pathway for UDP-N-acetylglucosamine (UDP-GlcNAc). The C-terminal domain catalyzes the transfer of acetyl group from acetyl coenzyme A to glucosamine-1-phosphate (GlcN-1-P) to produce N-acetylglucosamine-1-phosphate (GlcNAc-1-P), which is converted into UDP-GlcNAc by the transfer of uridine 5-monophosphate (from uridine 5-triphosphate), a reaction catalyzed by the N-terminal domain. This chain is Bifunctional protein GlmU, found in Sphingopyxis alaskensis (strain DSM 13593 / LMG 18877 / RB2256) (Sphingomonas alaskensis).